A 269-amino-acid polypeptide reads, in one-letter code: Formamidopyrimidine-DNA glycosylase (269 aa).

Residue P2 is the Schiff-base intermediate with DNA of the active site. E3 (proton donor) is an active-site residue. The active-site Proton donor; for beta-elimination activity is K57. Residues H90, R109, and K150 each contribute to the DNA site. The segment at 235–269 (QVYGRAGEPCRQCGHPIEIAKHGQRSTFFCRHCQH) adopts an FPG-type zinc-finger fold. R259 serves as the catalytic Proton donor; for delta-elimination activity.

This sequence belongs to the FPG family. In terms of assembly, monomer. Zn(2+) is required as a cofactor.

The catalysed reaction is Hydrolysis of DNA containing ring-opened 7-methylguanine residues, releasing 2,6-diamino-4-hydroxy-5-(N-methyl)formamidopyrimidine.. The enzyme catalyses 2'-deoxyribonucleotide-(2'-deoxyribose 5'-phosphate)-2'-deoxyribonucleotide-DNA = a 3'-end 2'-deoxyribonucleotide-(2,3-dehydro-2,3-deoxyribose 5'-phosphate)-DNA + a 5'-end 5'-phospho-2'-deoxyribonucleoside-DNA + H(+). In terms of biological role, involved in base excision repair of DNA damaged by oxidation or by mutagenic agents. Acts as a DNA glycosylase that recognizes and removes damaged bases. Has a preference for oxidized purines, such as 7,8-dihydro-8-oxoguanine (8-oxoG). Has AP (apurinic/apyrimidinic) lyase activity and introduces nicks in the DNA strand. Cleaves the DNA backbone by beta-delta elimination to generate a single-strand break at the site of the removed base with both 3'- and 5'-phosphates. The protein is Formamidopyrimidine-DNA glycosylase of Yersinia pseudotuberculosis serotype O:1b (strain IP 31758).